The chain runs to 124 residues: Succinate dehydrogenase cytochrome b556 subunit (124 aa).

The Cytoplasmic portion of the chain corresponds to 1 to 29; that stretch reads MTKTKQEIYNKRPTSPHLSIYKLQISSTL. A helical transmembrane segment spans residues 30 to 55; it reads SILHRMTGVALFFAVSILAWWLILSK. Over 56-67 the chain is Periplasmic; the sequence is YDNNYLQFANCC. A helical membrane pass occupies residues 68–88; that stretch reads IIKICLVAVSYAWFYHLCNGI. His-83 contacts heme. Residues 89 to 103 are Cytoplasmic-facing; sequence RHLFWDIGYGFSIKA. The helical transmembrane segment at 104 to 124 threads the bilayer; the sequence is VNITGWCVVVCSILLTMLLWV.

Belongs to the cytochrome b560 family. Part of an enzyme complex containing four subunits: a flavoprotein, an iron-sulfur protein, plus two membrane-anchoring proteins, SdhC and SdhD. The complex can form homotrimers. Heme is required as a cofactor.

Its subcellular location is the cell inner membrane. It participates in carbohydrate metabolism; tricarboxylic acid cycle. In terms of biological role, membrane-anchoring subunit of succinate dehydrogenase (SDH). The polypeptide is Succinate dehydrogenase cytochrome b556 subunit (sdhC) (Rickettsia felis (strain ATCC VR-1525 / URRWXCal2) (Rickettsia azadi)).